The following is a 388-amino-acid chain: S-adenosylmethionine synthase (388 aa).

An ATP-binding site is contributed by histidine 16. Aspartate 18 lines the Mg(2+) pocket. Glutamate 44 contacts K(+). 2 residues coordinate L-methionine: glutamate 57 and glutamine 100. Residues 100-110 (QSPEIAQGVDR) form a flexible loop region. ATP is bound by residues 165-167 (DAK), 231-232 (KF), aspartate 240, 246-247 (RK), alanine 263, and lysine 267. Residue aspartate 240 coordinates L-methionine. Lysine 271 lines the L-methionine pocket.

Belongs to the AdoMet synthase family. In terms of assembly, homotetramer; dimer of dimers. Mg(2+) is required as a cofactor. It depends on K(+) as a cofactor.

It localises to the cytoplasm. It carries out the reaction L-methionine + ATP + H2O = S-adenosyl-L-methionine + phosphate + diphosphate. It participates in amino-acid biosynthesis; S-adenosyl-L-methionine biosynthesis; S-adenosyl-L-methionine from L-methionine: step 1/1. Its function is as follows. Catalyzes the formation of S-adenosylmethionine (AdoMet) from methionine and ATP. The overall synthetic reaction is composed of two sequential steps, AdoMet formation and the subsequent tripolyphosphate hydrolysis which occurs prior to release of AdoMet from the enzyme. This chain is S-adenosylmethionine synthase, found in Psychrobacter sp. (strain PRwf-1).